Here is an 89-residue protein sequence, read N- to C-terminus: Cell division topological specificity factor (89 aa).

Belongs to the MinE family.

In terms of biological role, prevents the cell division inhibition by proteins MinC and MinD at internal division sites while permitting inhibition at polar sites. This ensures cell division at the proper site by restricting the formation of a division septum at the midpoint of the long axis of the cell. The polypeptide is Cell division topological specificity factor (Heliobacterium modesticaldum (strain ATCC 51547 / Ice1)).